The following is a 59-amino-acid chain: Large ribosomal subunit protein bL32 (59 aa).

Basic residues predominate over residues 1-16 (MAVPKRKTSPSKRGMR). The segment at 1–59 (MAVPKRKTSPSKRGMRRSADALKAPTYVEDKNSGELRRPHHIDLKSGMYRGRQVLEAKE) is disordered. Positions 28 to 44 (VEDKNSGELRRPHHIDL) are enriched in basic and acidic residues.

The protein belongs to the bacterial ribosomal protein bL32 family.

The sequence is that of Large ribosomal subunit protein bL32 from Brucella anthropi (strain ATCC 49188 / DSM 6882 / CCUG 24695 / JCM 21032 / LMG 3331 / NBRC 15819 / NCTC 12168 / Alc 37) (Ochrobactrum anthropi).